A 41-amino-acid chain; its full sequence is Photosystem I reaction center subunit IX (41 aa).

Residues 7-27 (YLSVAPVLSTLWFGALAGLLI) traverse the membrane as a helical segment.

The protein belongs to the PsaJ family.

It localises to the plastid. It is found in the chloroplast thylakoid membrane. Its function is as follows. May help in the organization of the PsaE and PsaF subunits. This Jasminum nudiflorum (Winter jasmine) protein is Photosystem I reaction center subunit IX.